The chain runs to 338 residues: MFSHLRNRLSVNRPQALSSQIRAASTMKEAIVSRGPRVHIIDSPIPKAGPGQVVVKIEYAGSNPKDWKRPEYWGSKATMNQGDDHSGTVYEVGEGVSDFKIGDRVAAMHEGKQPGGSYAEYGVSWAYTTIHLPEQTTFQEGAAIPFAAFTAACALYAKLDLPYPRHPVSDDQKIPLVIWGASSAVGSYAVQLAKKSNIHPLICIAGRAQEHVERMIDGSKGDIVIDYRKGHEAVAQKIKANLSGQKLEYAFDAVSEMGSYQTICDVLDQEIGKITLIIPAQSYSDIPKTIKKSVTTVASVHEDLKEFARGFSTYFGRGLQDGWLKAHPQEVVPGDWRG.

65–68 is an NADP(+) binding site; sequence KDWK. Substrate is bound at residue 147–153; sequence AAFTAAC. NADP(+)-binding positions include 182 to 185, 205 to 208, tyrosine 227, and 277 to 278; these read SSAV, AGRA, and II.

It belongs to the zinc-containing alcohol dehydrogenase family.

Functionally, trans-enoyl reductase; part of the gene cluster that mediates the biosynthesis of fusarubins, highly pigmented naphthoquinones responsible for the coloration of the fruiting bodies. The non-reducing polyketide synthase FSR1 is responsible for the condensation of seven acetyl-CoA units to yield a haptaketide. After rings A and B are formed by aldol-type cyclization, the PKS-derived product is released as 6-O-demethylfusarubinaldehyde. Then, two hydroxyl groups at C-5 and C-10 are incorporated by FSR3, and simultaneously hydroxyl groups at C-6 and C-8 are methylated by FSR2. The aldehyde is, on the one hand, reduced by FSR3 to 8-O-methylfusarubin alcohol, which equilibrates mainly with 8-O-methylfusarubin and only small amounts of 8-O-methylnectriafurone. On the other hand, the aldehyde can be oxidized to form 8-O-methylfusarubinic acid, a reaction driven by FSR3 equilibrating with 8-O-methylfusarubinlactone, finally resulting in 8-O-methylanhydrofusarubinlactol after a further reduction step and loss of water. 8-O-Methylfusarubinic acid can also undergo decarboxylation, resulting in 8-O-methyl-13-hydroxynorjavanicin after another hydroxylation step at C-13. Both steps are most likely also accomplished by FSR3. No enzymatic function has been determined so far for either FSR4 and FSR5. Their deletion does not alter the product spectrum, but the possibility that they catalyze specific enzymatic steps during perithecium development cannot be ruled out. FSR4 might possess a regulatory function in the biosynthesis of fusarubins. The chain is Trans-enoyl reductase fsr4 from Gibberella fujikuroi (strain CBS 195.34 / IMI 58289 / NRRL A-6831) (Bakanae and foot rot disease fungus).